The primary structure comprises 701 residues: CRS2-associated factor 1, chloroplastic (701 aa).

Residues 1 to 37 (MSLKLNTPFPIFAPSLFPNHNPRAPSEIRFSRWGNAN) constitute a chloroplast transit peptide. 2 disordered regions span residues 68–136 (VHTH…PEVK) and 191–221 (LPQS…QKPG). CRM domains are found at residues 241-337 (EPLT…TRPR) and 359-455 (EGLT…LTTP). Residues 471–532 (LPEDDEPSVS…SLQSWSTKDV (62 aa)) are disordered. Polar residues-rich tracts occupy residues 479–492 (VSPN…QNPP) and 520–530 (TINSLQSWSTK). A CRS2 binding region spans residues 564-586 (RVLILMKQAVESGTALVLDAADL).

In terms of assembly, interacts with CRS2 and RNA. Part of large ribonucleo-protein complexes that include group IIB introns, CRS2 and CAF1.

The protein resides in the plastid. It localises to the chloroplast stroma. In terms of biological role, required for the splicing of group IIB introns in chloroplasts. Forms splicing particles with CRS2. Interacts with RNA and confers intron specificity of the splicing particles. This is CRS2-associated factor 1, chloroplastic from Arabidopsis thaliana (Mouse-ear cress).